We begin with the raw amino-acid sequence, 372 residues long: Transaldolase (372 aa).

Lysine 140 serves as the catalytic Schiff-base intermediate with substrate.

The protein belongs to the transaldolase family. Type 2 subfamily.

The protein localises to the cytoplasm. The catalysed reaction is D-sedoheptulose 7-phosphate + D-glyceraldehyde 3-phosphate = D-erythrose 4-phosphate + beta-D-fructose 6-phosphate. The protein operates within carbohydrate degradation; pentose phosphate pathway; D-glyceraldehyde 3-phosphate and beta-D-fructose 6-phosphate from D-ribose 5-phosphate and D-xylulose 5-phosphate (non-oxidative stage): step 2/3. Transaldolase is important for the balance of metabolites in the pentose-phosphate pathway. The sequence is that of Transaldolase from Acidothermus cellulolyticus (strain ATCC 43068 / DSM 8971 / 11B).